Reading from the N-terminus, the 418-residue chain is Tyrosine--tRNA ligase (418 aa).

Tyr-34 contacts L-tyrosine. The short motif at 39-48 (PTADSLHLGH) is the 'HIGH' region element. Tyr-169 and Gln-173 together coordinate L-tyrosine. The 'KMSKS' region motif lies at 229–233 (KFGKS). Lys-232 is a binding site for ATP. Residues 352 to 418 (NNIVELLVSS…GKKKYFVLTY (67 aa)) form the S4 RNA-binding domain.

Belongs to the class-I aminoacyl-tRNA synthetase family. TyrS type 1 subfamily. Homodimer.

It is found in the cytoplasm. The enzyme catalyses tRNA(Tyr) + L-tyrosine + ATP = L-tyrosyl-tRNA(Tyr) + AMP + diphosphate + H(+). Catalyzes the attachment of tyrosine to tRNA(Tyr) in a two-step reaction: tyrosine is first activated by ATP to form Tyr-AMP and then transferred to the acceptor end of tRNA(Tyr). In Streptococcus pneumoniae serotype 19F (strain G54), this protein is Tyrosine--tRNA ligase.